The following is a 163-amino-acid chain: NADPH-dependent 7-cyano-7-deazaguanine reductase (163 aa).

Catalysis depends on C54, which acts as the Thioimide intermediate. D61 acts as the Proton donor in catalysis. Residues 76-78 and 95-96 contribute to the substrate site; these read VES and HE.

It belongs to the GTP cyclohydrolase I family. QueF type 1 subfamily.

Its subcellular location is the cytoplasm. The enzyme catalyses 7-aminomethyl-7-carbaguanine + 2 NADP(+) = 7-cyano-7-deazaguanine + 2 NADPH + 3 H(+). Its pathway is tRNA modification; tRNA-queuosine biosynthesis. Functionally, catalyzes the NADPH-dependent reduction of 7-cyano-7-deazaguanine (preQ0) to 7-aminomethyl-7-deazaguanine (preQ1). The chain is NADPH-dependent 7-cyano-7-deazaguanine reductase from Streptococcus thermophilus (strain CNRZ 1066).